A 288-amino-acid chain; its full sequence is Solute carrier family 25 member 45 (288 aa).

Solcar repeat units follow at residues 1–83 (MPVE…TLLA), 97–191 (PSYT…LCRQ), and 199–286 (PSSA…LLRL). 6 helical membrane passes run 6–26 (FVAG…FDTV), 58–78 (GMSF…GVYS), 102–122 (IFIA…PFDL), 166–186 (GSWA…VTYE), 202–222 (ATVL…ATPF), and 266–286 (SARA…LLRL).

It belongs to the mitochondrial carrier (TC 2.A.29) family. Widely expressed, with highest levels in testis, liver and kidney and low levels in brain, including cortex, cerebellum, hippocampus and hypothalamus, and heart.

Its subcellular location is the mitochondrion inner membrane. In Mus musculus (Mouse), this protein is Solute carrier family 25 member 45 (Slc25a45).